The chain runs to 114 residues: Protein D2 (114 aa).

This sequence belongs to the phosphatidylethanolamine-binding protein family.

The polypeptide is Protein D2 (D2) (Onchocerca volvulus).